The following is a 697-amino-acid chain: Potassium-transporting ATPase ATP-binding subunit (697 aa).

The next 4 helical transmembrane spans lie at 55-75 (PIMF…FLPS), 79-99 (SIPG…VLFA), 245-265 (LTLI…YLGF), and 271-291 (VLVA…LSAI). Catalysis depends on D324, which acts as the 4-aspartylphosphate intermediate. ATP contacts are provided by residues D361, E365, 393–400 (FKAETRMS), and K412. 2 residues coordinate Mg(2+): D535 and D539. A run of 3 helical transmembrane segments spans residues 605–625 (FAII…LNIM), 633–653 (AILS…PLAM), and 677–697 (GGVI…GLFI).

Belongs to the cation transport ATPase (P-type) (TC 3.A.3) family. Type IA subfamily. As to quaternary structure, the system is composed of three essential subunits: KdpA, KdpB and KdpC.

The protein resides in the cell membrane. It carries out the reaction K(+)(out) + ATP + H2O = K(+)(in) + ADP + phosphate + H(+). In terms of biological role, part of the high-affinity ATP-driven potassium transport (or Kdp) system, which catalyzes the hydrolysis of ATP coupled with the electrogenic transport of potassium into the cytoplasm. This subunit is responsible for energy coupling to the transport system and for the release of the potassium ions to the cytoplasm. This is Potassium-transporting ATPase ATP-binding subunit from Bacillus cereus (strain G9842).